The following is a 276-amino-acid chain: F-actin-capping protein subunit beta (276 aa).

Belongs to the F-actin-capping protein beta subunit family. In terms of assembly, component of the F-actin capping complex, composed of a heterodimer of an alpha and a beta subunit. Subunit of dynactin, a multiprotein complex part of a tripartite complex with dynein and a adapter, such as BICDL1, BICD2 or HOOK3.

It is found in the cytoplasm. Its subcellular location is the cytoskeleton. F-actin-capping proteins bind in a Ca(2+)-independent manner to the fast growing ends of actin filaments (barbed end) thereby blocking the exchange of subunits at these ends. Unlike other capping proteins (such as gelsolin and severin), these proteins do not sever actin filaments. Forms, with CAPZB, the barbed end of the fast growing ends of actin filaments in the dynactin complex and stabilizes dynactin structure. The dynactin multiprotein complex activates the molecular motor dynein for ultra-processive transport along microtubules. The sequence is that of F-actin-capping protein subunit beta (cpb) from Drosophila melanogaster (Fruit fly).